We begin with the raw amino-acid sequence, 276 residues long: Large ribosomal subunit protein uL2 (276 aa).

The interval 224–276 (VAMNPVDHPHGGGEGKTGEGRVPVSPWGTPTKGYRTRRNKRTTSMIVQRRQKR) is disordered. A compositionally biased stretch (basic and acidic residues) spans 230–242 (DHPHGGGEGKTGE).

Belongs to the universal ribosomal protein uL2 family. In terms of assembly, part of the 50S ribosomal subunit. Forms a bridge to the 30S subunit in the 70S ribosome.

Functionally, one of the primary rRNA binding proteins. Required for association of the 30S and 50S subunits to form the 70S ribosome, for tRNA binding and peptide bond formation. It has been suggested to have peptidyltransferase activity; this is somewhat controversial. Makes several contacts with the 16S rRNA in the 70S ribosome. This is Large ribosomal subunit protein uL2 from Polynucleobacter asymbioticus (strain DSM 18221 / CIP 109841 / QLW-P1DMWA-1) (Polynucleobacter necessarius subsp. asymbioticus).